The chain runs to 202 residues: Arenicin-1 (202 aa).

Positions 1–25 are cleaved as a signal peptide; that stretch reads MTSTQSVAVCATLILAIFCVNDIHC. The propeptide occupies 26 to 181; the sequence is DPIAEARAAA…SGDNNEPEKR (156 aa). A BRICHOS domain is found at 73-168; sequence GDGVEGSVMV…ACQGKSVYWL (96 aa). 2 cysteine pairs are disulfide-bonded: cysteine 100-cysteine 160 and cysteine 184-cysteine 201.

Its function is as follows. Has antimicrobial activity against the Gram-negative bacteria E.coli and P.mirabilis, the Gram-positive bacterium L.monocytogenes and the yeast C.albicans. This Arenicola marina (Lugworm) protein is Arenicin-1.